A 62-amino-acid chain; its full sequence is Conotoxin Im5.1 (62 aa).

Positions 1 to 19 are cleaved as a signal peptide; it reads MYCLPVFIILLLLISSAPS. The propeptide occupies 20–48; the sequence is TPPQPRNKDRVHLISLLDNHKQILQRDWN. Trp-60 carries the tryptophan amide modification.

It belongs to the conotoxin T superfamily. Post-translationally, contains 2 disulfide bonds that can be either 'C1-C3, C2-C4' or 'C1-C4, C2-C3', since these disulfide connectivities have been observed for conotoxins with cysteine framework V (for examples, see AC P0DQQ7 and AC P81755). In terms of tissue distribution, expressed by the venom duct.

Its subcellular location is the secreted. The protein is Conotoxin Im5.1 of Conus imperialis (Imperial cone).